Consider the following 241-residue polypeptide: Probable GTP-binding protein EngB (241 aa).

One can recognise an EngB-type G domain in the interval 56-240 (GPVEIAFAGR…RAAIALLLKE (185 aa)). GTP-binding positions include 64–71 (GRSNVGKS), 91–95 (GRTQE), 118–121 (DMPG), 185–188 (TKID), and 219–221 (TSS). Mg(2+) contacts are provided by Ser-71 and Thr-93.

This sequence belongs to the TRAFAC class TrmE-Era-EngA-EngB-Septin-like GTPase superfamily. EngB GTPase family. Mg(2+) serves as cofactor.

Necessary for normal cell division and for the maintenance of normal septation. This Brucella suis biovar 1 (strain 1330) protein is Probable GTP-binding protein EngB.